The following is a 167-amino-acid chain: HTH-type transcriptional repressor IacR (167 aa).

Polar residues predominate over residues M1 to A10. The disordered stretch occupies residues M1–D25. In terms of domain architecture, HTH marR-type spans E30 to H162. The segment at residues I76 to E99 is a DNA-binding region (H-T-H motif).

Its activity is regulated as follows. Exposure to indole-3-acetic acid (IAA) probably relieves the repressor activity. Its function is as follows. Probably acts as a repressor of iacA expression. The polypeptide is HTH-type transcriptional repressor IacR (Pseudomonas putida (Arthrobacter siderocapsulatus)).